The chain runs to 255 residues: tRNA (guanine-N(1)-)-methyltransferase (255 aa).

S-adenosyl-L-methionine-binding positions include glycine 113 and 133–138 (IGDYVL).

The protein belongs to the RNA methyltransferase TrmD family. Homodimer.

Its subcellular location is the cytoplasm. It catalyses the reaction guanosine(37) in tRNA + S-adenosyl-L-methionine = N(1)-methylguanosine(37) in tRNA + S-adenosyl-L-homocysteine + H(+). Functionally, specifically methylates guanosine-37 in various tRNAs. The sequence is that of tRNA (guanine-N(1)-)-methyltransferase from Escherichia coli O6:K15:H31 (strain 536 / UPEC).